The sequence spans 139 residues: Actin-depolymerizing factor (139 aa).

The 135-residue stretch at 5 to 139 (SSGMAVDDEC…SMDIIKARAF (135 aa)) folds into the ADF-H domain.

It belongs to the actin-binding proteins ADF family. In terms of tissue distribution, preferentially in mature anther.

In terms of biological role, actin-depolymerizing protein. Severs actin filaments (F-actin) and binds to actin monomers. The protein is Actin-depolymerizing factor of Lilium longiflorum (Trumpet lily).